Here is a 301-residue protein sequence, read N- to C-terminus: MTTKHDVKTFQGFILTLQEYWAQQGCAIVQPLDMEVGAGTFHPQTFLRSLGPEPMSSAYVQPSRRPTDGRYGENPNRLQHYYQFQVVLKPSPDNIQELYLGSLQALGIDTQIHDIRFVEDNWESPTLGAWGLGWEIWLNGMEVTQFTYFQQVGGIECSPVTGEITYGLERLAMYIQGVDSVYDLVWTDGPLGRITYGDVFHQNEVEQSTYNFEHADVDFMFTLFDQCEKMCQHLLSLEKPLPLPAYEQVMKASHAFNLLDARHAISVTERQRYILRVRTMAKAVAESYYQAREALGFPMCK.

It belongs to the class-II aminoacyl-tRNA synthetase family. As to quaternary structure, tetramer of two alpha and two beta subunits.

The protein resides in the cytoplasm. The enzyme catalyses tRNA(Gly) + glycine + ATP = glycyl-tRNA(Gly) + AMP + diphosphate. This is Glycine--tRNA ligase alpha subunit from Shewanella baltica (strain OS223).